A 652-amino-acid chain; its full sequence is ATP-dependent zinc metalloprotease FtsH 1 (652 aa).

Residues 1 to 9 are Cytoplasmic-facing; the sequence is MSDNKWLRN. Residues 10 to 30 traverse the membrane as a helical segment; it reads GFVWMILIIAAIAVWVTFVQG. Residues 31-110 lie on the Extracellular side of the membrane; the sequence is GRGGATITTQ…QTHRASQWGN (80 aa). The helical transmembrane segment at 111 to 131 threads the bilayer; sequence VLGTLTFLLPTLFLIGVIIFM. Residues 132-652 are Cytoplasmic-facing; it reads MRQAQGTNNQ…VPHIKPQPAS (521 aa). 203 to 210 lines the ATP pocket; it reads GPPGTGKT. Residue His-425 coordinates Zn(2+). Glu-426 is an active-site residue. His-429 and Asp-501 together coordinate Zn(2+). The interval 623-652 is disordered; sequence IATPETARPDSPSEARPAAPVPHIKPQPAS. Positions 641 to 652 are enriched in pro residues; sequence APVPHIKPQPAS.

In the central section; belongs to the AAA ATPase family. The protein in the C-terminal section; belongs to the peptidase M41 family. As to quaternary structure, homohexamer. Requires Zn(2+) as cofactor.

Its subcellular location is the cell membrane. Its function is as follows. Acts as a processive, ATP-dependent zinc metallopeptidase for both cytoplasmic and membrane proteins. Plays a role in the quality control of integral membrane proteins. In Thermomicrobium roseum (strain ATCC 27502 / DSM 5159 / P-2), this protein is ATP-dependent zinc metalloprotease FtsH 1.